Here is a 277-residue protein sequence, read N- to C-terminus: Energy-coupling factor transporter ATP-binding protein EcfA1 (277 aa).

The ABC transporter domain occupies 5-242 (VKVNNISFEY…IKMLKEIGLD (238 aa)). ATP is bound at residue 41 to 48 (GHNGSGKS).

The protein belongs to the ABC transporter superfamily. Energy-coupling factor EcfA family. As to quaternary structure, forms a stable energy-coupling factor (ECF) transporter complex composed of 2 membrane-embedded substrate-binding proteins (S component), 2 ATP-binding proteins (A component) and 2 transmembrane proteins (T component).

It is found in the cell membrane. ATP-binding (A) component of a common energy-coupling factor (ECF) ABC-transporter complex. Unlike classic ABC transporters this ECF transporter provides the energy necessary to transport a number of different substrates. In Clostridioides difficile (strain 630) (Peptoclostridium difficile), this protein is Energy-coupling factor transporter ATP-binding protein EcfA1.